The sequence spans 536 residues: MPNPFSRTPQSPSQASRKPSVVELLSSPPPLPSPDHDDVHSFSLSRHTSMSSVATGATGDRSRGSVSAGTTSGGVDWSDIKLSELTEPQKLISINSGYTVQEAFKTLVTHNLTSVPVSLSKTDSSDLENCLSFDYSDLNTYLLLLFGRARLDALSVDEINVEGSMSKLEYAQQMVNKAKHGGEVPVDFILRLHPKNPFIKFPEQETLYPAMEALGNGVHRVAITKDSSPHAPITGILSQRRLIKYMWENARRFPSLDFLINSTIQDLNIGSSNPLTIHGDQPLIDALQKMFTERVSSLAVIDRSRCLMGNISIVDVKHVSSSKNQDLLFKSVLNFISYNLSQKGIEAGQDQYPIFHVSNQSSLGRVIAKLVATQSHRLWVVESRQVKHHASSSGGFGSISGTRSGSISGASSAGPVEAALSPQSSSNNSAAAAAAAAASNPSTGSGSVSGSVSGTNSASGTGAGDSGLPGKLIGVVTLTDILGLFAESKYGKKIDPGLARRQRRRSSTSTRSSIDTTQGEIFRKSYTKQEGVFGKE.

Polar residues-rich tracts occupy residues Met1–Arg17 and Phe42–Thr55. Residues Met1 to Ser72 form a disordered region. 2 CBS domains span residues Leu192 to Ser255 and Leu267 to Leu327. Low complexity predominate over residues Ser439–Gly460. 2 disordered regions span residues Ser439–Ser466 and Pro496–Glu536.

It belongs to the SDS23 family.

The protein localises to the cytoplasm. Its subcellular location is the nucleus. Involved in DNA replication and cell separation. The protein is Protein SDS23 (SDS23) of Meyerozyma guilliermondii (strain ATCC 6260 / CBS 566 / DSM 6381 / JCM 1539 / NBRC 10279 / NRRL Y-324) (Yeast).